The sequence spans 174 residues: ATP-dependent protease subunit HslV (174 aa).

The active site involves Thr-2. Na(+)-binding residues include Gly-157, Cys-160, and Thr-163.

Belongs to the peptidase T1B family. HslV subfamily. As to quaternary structure, a double ring-shaped homohexamer of HslV is capped on each side by a ring-shaped HslU homohexamer. The assembly of the HslU/HslV complex is dependent on binding of ATP.

It localises to the cytoplasm. The enzyme catalyses ATP-dependent cleavage of peptide bonds with broad specificity.. Its activity is regulated as follows. Allosterically activated by HslU binding. In terms of biological role, protease subunit of a proteasome-like degradation complex believed to be a general protein degrading machinery. This is ATP-dependent protease subunit HslV from Yersinia pseudotuberculosis serotype I (strain IP32953).